The following is a 221-amino-acid chain: ATP-dependent dethiobiotin synthetase BioD (221 aa).

12–17 is an ATP binding site; the sequence is EVGKTV. Threonine 16 contributes to the Mg(2+) binding site. Lysine 39 is a catalytic residue. Threonine 43 is a substrate binding site. ATP is bound by residues aspartate 47, 105–108, and 165–166; these read EGLG and SC. Mg(2+) is bound by residues aspartate 47 and glutamate 105.

It belongs to the dethiobiotin synthetase family. As to quaternary structure, homodimer. The cofactor is Mg(2+).

The protein localises to the cytoplasm. The catalysed reaction is (7R,8S)-7,8-diammoniononanoate + CO2 + ATP = (4R,5S)-dethiobiotin + ADP + phosphate + 3 H(+). It carries out the reaction (7R,8S)-8-amino-7-(carboxyamino)nonanoate + ATP = (4R,5S)-dethiobiotin + ADP + phosphate + H(+). Its pathway is cofactor biosynthesis; biotin biosynthesis; biotin from 7,8-diaminononanoate: step 1/2. Its function is as follows. Catalyzes a mechanistically unusual reaction, the ATP-dependent insertion of CO2 between the N7 and N8 nitrogen atoms of 7,8-diaminopelargonic acid (DAPA, also called 7,8-diammoniononanoate) to form a ureido ring. This cyanobacterium does not encode bioA (which catalyzes the formation of the precursor for this reaction in the cannonical pathway), instead it encodes bioU, which replaces bioA and also performs the first half of the cannonical BioD reaction. Thus in this organism BioD has a different substrate. The protein is ATP-dependent dethiobiotin synthetase BioD of Crocosphaera subtropica (strain ATCC 51142 / BH68) (Cyanothece sp. (strain ATCC 51142)).